A 233-amino-acid polypeptide reads, in one-letter code: Large ribosomal subunit protein uL1 (233 aa).

This sequence belongs to the universal ribosomal protein uL1 family. As to quaternary structure, part of the 50S ribosomal subunit.

Its function is as follows. Binds directly to 23S rRNA. The L1 stalk is quite mobile in the ribosome, and is involved in E site tRNA release. Protein L1 is also a translational repressor protein, it controls the translation of the L11 operon by binding to its mRNA. This is Large ribosomal subunit protein uL1 from Geobacillus stearothermophilus (Bacillus stearothermophilus).